The chain runs to 509 residues: MDIDVGPVDPSVLYEQDLHVSSAVWEGQERGLLRCQEHTSLLHQWKLTDEQINLVDKAGFGYFRKIGPMSLNNSLISALVERWRRETNTFHLPLGEMTITLDEVALVLGLEIDGDPIVGSKVGDEVAMDMCGRLLGKLPSAANKEVNCSRVKLNWLKRTFSECPEDASFDVVKCHTRAYLLYLIGSTIFATTDGDKVSVKYLPLFEDFDQAGRYAWGAAALACLYRALGNASLKSQSNICGCLTLLQCWSYFHLDIGRPEKSEACFPLALLWKGKGSRSKTDLSEYRRELDDLDPSKITWCPYERFENLIPPHIKAKLILGRSKTTLVCFEKIELHFPDRCLRQFGKRQPIPLKVKRRDRKNRRLDDLDTSMSLACEEWAERGDHIVDSPGGGNVVDDGAYMEWYARISITKLYREAFLESQVMNMIACMREFEEAASGIALERLSPAEREVMESVKDTFANSLTFGGWQEVAVNSGYGKRRRRNEHTPTPNNGGGNDISSLLLQKEDS.

Positions 477-509 (GYGKRRRRNEHTPTPNNGGGNDISSLLLQKEDS) are disordered. The segment covering 488–503 (TPTPNNGGGNDISSLL) has biased composition (polar residues).

Expressed in root tips, the shoot apical meristem (SAM), leaves, mature flowers and embryos.

The protein localises to the nucleus. Acts as an important factor for cell fate determination and maintenance throughout plant development. Required for the organization of the root apical meristem (RAM) and the shoot apical meristem (SAM). Required to maintain genome stability and cell division activity in meristematic cells. This Arabidopsis thaliana (Mouse-ear cress) protein is Protein MAIN-LIKE 1.